The chain runs to 521 residues: D-aminoacyl-tRNA deacylase (521 aa).

Disordered stretches follow at residues 323 to 353 (AVGTVHTKDSTDIDTGTNHNVDAERTESEDS) and 499 to 521 (VFSTSSSSSSSSSSSSSSSSSSS). Positions 343 to 353 (VDAERTESEDS) are enriched in basic and acidic residues. A compositionally biased stretch (low complexity) spans 501-521 (STSSSSSSSSSSSSSSSSSSS).

The protein belongs to the DtdA deacylase family. Monomer. It depends on Zn(2+) as a cofactor.

It catalyses the reaction a D-aminoacyl-tRNA + H2O = a tRNA + a D-alpha-amino acid + H(+). The catalysed reaction is glycyl-tRNA(Ala) + H2O = tRNA(Ala) + glycine + H(+). Functionally, D-aminoacyl-tRNA deacylase with broad substrate specificity. By recycling D-aminoacyl-tRNA to D-amino acids and free tRNA molecules, this enzyme counteracts the toxicity associated with the formation of D-aminoacyl-tRNA entities in vivo. The sequence is that of D-aminoacyl-tRNA deacylase from Haloquadratum walsbyi (strain DSM 16790 / HBSQ001).